A 154-amino-acid chain; its full sequence is Histone H2B.v3 (154 aa).

Basic residues predominate over residues 1-11; that stretch reads MVFVKGQKKAT. A disordered region spans residues 1 to 48; the sequence is MVFVKGQKKATKGSTQSGEEKTASTTPKVTKTPTEGGEKKRKKRKSDY. Residues 12 to 27 show a composition bias toward polar residues; sequence KGSTQSGEEKTASTTP.

This sequence belongs to the histone H2B family. In terms of assembly, the nucleosome is a histone octamer containing two molecules each of H2A, H2B, H3 and H4 assembled in one H3-H4 heterotetramer and two H2A-H2B heterodimers. The octamer wraps approximately 147 bp of DNA.

It localises to the nucleus. The protein resides in the chromosome. Functionally, core component of nucleosome which plays a central role in DNA double strand break (DSB) repair. Nucleosomes wrap and compact DNA into chromatin, limiting DNA accessibility to the cellular machineries which require DNA as a template. Histones thereby play a central role in transcription regulation, DNA repair, DNA replication and chromosomal stability. DNA accessibility is regulated via a complex set of post-translational modifications of histones, also called histone code, and nucleosome remodeling. The chain is Histone H2B.v3 (H2Bv3) from Dictyostelium discoideum (Social amoeba).